Consider the following 209-residue polypeptide: Potassium-transporting ATPase KdpC subunit (209 aa).

Residues 10 to 30 (VISLVFLFVLGFLFPTVTSLI) form a helical membrane-spanning segment.

Belongs to the KdpC family. In terms of assembly, the system is composed of three essential subunits: KdpA, KdpB and KdpC.

It is found in the cell membrane. Part of the high-affinity ATP-driven potassium transport (or Kdp) system, which catalyzes the hydrolysis of ATP coupled with the electrogenic transport of potassium into the cytoplasm. This subunit acts as a catalytic chaperone that increases the ATP-binding affinity of the ATP-hydrolyzing subunit KdpB by the formation of a transient KdpB/KdpC/ATP ternary complex. This Thermoplasma volcanium (strain ATCC 51530 / DSM 4299 / JCM 9571 / NBRC 15438 / GSS1) protein is Potassium-transporting ATPase KdpC subunit.